A 1116-amino-acid polypeptide reads, in one-letter code: Error-prone DNA polymerase (1116 aa).

The protein belongs to the DNA polymerase type-C family. DnaE2 subfamily.

Its subcellular location is the cytoplasm. It carries out the reaction DNA(n) + a 2'-deoxyribonucleoside 5'-triphosphate = DNA(n+1) + diphosphate. DNA polymerase involved in damage-induced mutagenesis and translesion synthesis (TLS). It is not the major replicative DNA polymerase. The chain is Error-prone DNA polymerase from Sinorhizobium medicae (strain WSM419) (Ensifer medicae).